The chain runs to 167 residues: Ribosome maturation factor RimM (167 aa).

Positions 94-165 constitute a PRC barrel domain; it reads EHEYYYSDII…TIKITPMEGL (72 aa).

It belongs to the RimM family. As to quaternary structure, binds ribosomal protein uS19.

It is found in the cytoplasm. In terms of biological role, an accessory protein needed during the final step in the assembly of 30S ribosomal subunit, possibly for assembly of the head region. Essential for efficient processing of 16S rRNA. May be needed both before and after RbfA during the maturation of 16S rRNA. It has affinity for free ribosomal 30S subunits but not for 70S ribosomes. This Staphylococcus epidermidis (strain ATCC 12228 / FDA PCI 1200) protein is Ribosome maturation factor RimM.